A 205-amino-acid polypeptide reads, in one-letter code: Protein-L-isoaspartate O-methyltransferase (205 aa).

Residue Ser-56 is part of the active site.

This sequence belongs to the methyltransferase superfamily. L-isoaspartyl/D-aspartyl protein methyltransferase family.

It localises to the cytoplasm. It catalyses the reaction [protein]-L-isoaspartate + S-adenosyl-L-methionine = [protein]-L-isoaspartate alpha-methyl ester + S-adenosyl-L-homocysteine. Its function is as follows. Catalyzes the methyl esterification of L-isoaspartyl residues in peptides and proteins that result from spontaneous decomposition of normal L-aspartyl and L-asparaginyl residues. It plays a role in the repair and/or degradation of damaged proteins. The sequence is that of Protein-L-isoaspartate O-methyltransferase from Aeromonas salmonicida (strain A449).